The chain runs to 304 residues: tRNA-uridine aminocarboxypropyltransferase 1 (304 aa).

The tract at residues 1–30 (MALSPSVVPQESEENNANCVETKQSQTAST) is disordered. Residues 15 to 30 (NNANCVETKQSQTAST) are compositionally biased toward polar residues. A DXTW motif is present at residues 206–209 (DSTW).

It belongs to the TDD superfamily. DTWD1 family.

The protein localises to the nucleus. It carries out the reaction a uridine in tRNA + S-adenosyl-L-methionine = a 3-[(3S)-3-amino-3-carboxypropyl]uridine in tRNA + S-methyl-5'-thioadenosine + H(+). In terms of biological role, catalyzes the formation of 3-(3-amino-3-carboxypropyl)uridine (acp3U) at position 20 in the D-loop of several cytoplasmic tRNAs (acp3U(20)). The protein is tRNA-uridine aminocarboxypropyltransferase 1 of Rattus norvegicus (Rat).